Reading from the N-terminus, the 216-residue chain is Major fimbrial subunit (216 aa).

A signal peptide spans 1–20 (MKKTLLGSLILLAFAGNVQA). A disulfide bond links Cys41 and Cys81.

The protein belongs to the fimbrial protein family.

The protein localises to the fimbrium. Its function is as follows. Mediates adherence to oropharyngeal epithelial cells. Helps the airway colonization process. The protein is Major fimbrial subunit (hifA) of Haemophilus influenzae.